Here is a 692-residue protein sequence, read N- to C-terminus: Vitamin B12-dependent ribonucleoside-diphosphate reductase (692 aa).

The ATP-cone domain occupies 7 to 95 (AKVRRRDGTL…IYRQRRAELR (89 aa)). Residues S177, 192-193 (GC), G221, 375-379 (NPCGE), and 520-524 (PTGTI) each bind substrate. An intrachain disulfide couples C193 to C388. N375 acts as the Proton acceptor in catalysis. Catalysis depends on C377, which acts as the Cysteine radical intermediate. E379 serves as the catalytic Proton acceptor.

The protein belongs to the ribonucleoside diphosphate reductase class-2 family. Adenosylcob(III)alamin serves as cofactor.

The enzyme catalyses a 2'-deoxyribonucleoside 5'-diphosphate + [thioredoxin]-disulfide + H2O = a ribonucleoside 5'-diphosphate + [thioredoxin]-dithiol. Functionally, provides the precursors necessary for DNA synthesis. Catalyzes the biosynthesis of deoxyribonucleotides from the corresponding ribonucleotides. The sequence is that of Vitamin B12-dependent ribonucleoside-diphosphate reductase (nrdZ) from Mycobacterium tuberculosis (strain CDC 1551 / Oshkosh).